The sequence spans 144 residues: MLNIEQIKEIIPHRYPFLLVDKILEVDEGKRAVGIKNVSANEEFFNGHFPDYAVMPGVLIVEALAQVGAVAVLKKEENRGRLAFFAGIDNCRFKKQVRPGDQLRLEVEMTRVRGPIGKGKAIATVDGEVACEAEITFAIGDKKE.

The active site involves histidine 48.

It belongs to the thioester dehydratase family. FabZ subfamily.

The protein resides in the cytoplasm. The enzyme catalyses a (3R)-hydroxyacyl-[ACP] = a (2E)-enoyl-[ACP] + H2O. Involved in unsaturated fatty acids biosynthesis. Catalyzes the dehydration of short chain beta-hydroxyacyl-ACPs and long chain saturated and unsaturated beta-hydroxyacyl-ACPs. The polypeptide is 3-hydroxyacyl-[acyl-carrier-protein] dehydratase FabZ (Bacillus thuringiensis (strain Al Hakam)).